The chain runs to 240 residues: 2,3,4,5-tetrahydropyridine-2,6-dicarboxylate N-acetyltransferase (240 aa).

It belongs to the transferase hexapeptide repeat family. DapH subfamily.

The enzyme catalyses (S)-2,3,4,5-tetrahydrodipicolinate + acetyl-CoA + H2O = L-2-acetamido-6-oxoheptanedioate + CoA. It functions in the pathway amino-acid biosynthesis; L-lysine biosynthesis via DAP pathway; LL-2,6-diaminopimelate from (S)-tetrahydrodipicolinate (acetylase route): step 1/3. In terms of biological role, catalyzes the transfer of an acetyl group from acetyl-CoA to tetrahydrodipicolinate. The protein is 2,3,4,5-tetrahydropyridine-2,6-dicarboxylate N-acetyltransferase of Bacillus thuringiensis (strain Al Hakam).